The chain runs to 173 residues: Crossover junction endodeoxyribonuclease RuvC (173 aa).

Catalysis depends on residues aspartate 8, glutamate 69, and aspartate 141. Residues aspartate 8, glutamate 69, and aspartate 141 each contribute to the Mg(2+) site.

The protein belongs to the RuvC family. Homodimer which binds Holliday junction (HJ) DNA. The HJ becomes 2-fold symmetrical on binding to RuvC with unstacked arms; it has a different conformation from HJ DNA in complex with RuvA. In the full resolvosome a probable DNA-RuvA(4)-RuvB(12)-RuvC(2) complex forms which resolves the HJ. It depends on Mg(2+) as a cofactor.

The protein localises to the cytoplasm. The enzyme catalyses Endonucleolytic cleavage at a junction such as a reciprocal single-stranded crossover between two homologous DNA duplexes (Holliday junction).. Its function is as follows. The RuvA-RuvB-RuvC complex processes Holliday junction (HJ) DNA during genetic recombination and DNA repair. Endonuclease that resolves HJ intermediates. Cleaves cruciform DNA by making single-stranded nicks across the HJ at symmetrical positions within the homologous arms, yielding a 5'-phosphate and a 3'-hydroxyl group; requires a central core of homology in the junction. The consensus cleavage sequence is 5'-(A/T)TT(C/G)-3'. Cleavage occurs on the 3'-side of the TT dinucleotide at the point of strand exchange. HJ branch migration catalyzed by RuvA-RuvB allows RuvC to scan DNA until it finds its consensus sequence, where it cleaves and resolves the cruciform DNA. This is Crossover junction endodeoxyribonuclease RuvC from Stenotrophomonas maltophilia (strain R551-3).